Here is a 108-residue protein sequence, read N- to C-terminus: Class I hydrophobin hgfII (108 aa).

Residues 1–19 (MFSRIAAVSFLALPLLAAA) form the signal peptide. 4 disulfides stabilise this stretch: C28–C89, C35–C83, C36–C69, and C90–C103. N92 is a glycosylation site (N-linked (GlcNAc...) asparagine).

The protein belongs to the fungal hydrophobin family. As to quaternary structure, self-assembles to form functional amyloid fibrils called rodlets with a diameter of 15-30 nm. Self-assembly into fibrillar rodlets occurs spontaneously at hydrophobic:hydrophilic interfaces and the rodlets further associate laterally to form amphipathic monolayers. Highky expressed in hyphae cultured in liquid medium.

It is found in the secreted. The protein resides in the cell wall. Aerial growth, conidiation, and dispersal of filamentous fungi in the environment rely upon a capability of their secreting small amphipathic proteins called hydrophobins (HPBs) with low sequence identity. Class I can self-assemble into an outermost layer of rodlet bundles on aerial cell surfaces, conferring cellular hydrophobicity that supports fungal growth, development and dispersal; whereas Class II form highly ordered films at water-air interfaces through intermolecular interactions but contribute nothing to the rodlet structure. HgfII is a class I hydrophobin that is involved in cell surface hydrophobicity and might play a key role during the growth and development of hyphae cultured in liquid medium. The sequence is that of Class I hydrophobin hgfII from Grifola frondosa (Maitake).